A 132-amino-acid chain; its full sequence is Small ribosomal subunit protein uS8 (132 aa).

The protein belongs to the universal ribosomal protein uS8 family. Part of the 30S ribosomal subunit. Contacts proteins S5 and S12.

In terms of biological role, one of the primary rRNA binding proteins, it binds directly to 16S rRNA central domain where it helps coordinate assembly of the platform of the 30S subunit. The protein is Small ribosomal subunit protein uS8 of Bacillus pumilus (strain SAFR-032).